The primary structure comprises 157 residues: 3-hydroxyacyl-[acyl-carrier-protein] dehydratase FabZ (157 aa).

H58 is an active-site residue.

Belongs to the thioester dehydratase family. FabZ subfamily.

Its subcellular location is the cytoplasm. It catalyses the reaction a (3R)-hydroxyacyl-[ACP] = a (2E)-enoyl-[ACP] + H2O. In terms of biological role, involved in unsaturated fatty acids biosynthesis. Catalyzes the dehydration of short chain beta-hydroxyacyl-ACPs and long chain saturated and unsaturated beta-hydroxyacyl-ACPs. The sequence is that of 3-hydroxyacyl-[acyl-carrier-protein] dehydratase FabZ from Brucella ovis (strain ATCC 25840 / 63/290 / NCTC 10512).